The primary structure comprises 207 residues: Enolase (207 aa).

Q162 serves as a coordination point for (2R)-2-phosphoglycerate. E204 serves as the catalytic Proton donor.

The protein belongs to the enolase family.

The protein localises to the cytoplasm. It is found in the secreted. The protein resides in the cell surface. The catalysed reaction is (2R)-2-phosphoglycerate = phosphoenolpyruvate + H2O. It functions in the pathway carbohydrate degradation; glycolysis; pyruvate from D-glyceraldehyde 3-phosphate: step 4/5. Catalyzes the reversible conversion of 2-phosphoglycerate (2-PG) into phosphoenolpyruvate (PEP). It is essential for the degradation of carbohydrates via glycolysis. This Campylobacter fetus protein is Enolase.